The sequence spans 616 residues: Dihydroxy-acid dehydratase (616 aa).

Asp81 contacts Mg(2+). Position 122 (Cys122) interacts with [2Fe-2S] cluster. Positions 123 and 124 each coordinate Mg(2+). N6-carboxylysine is present on Lys124. [2Fe-2S] cluster is bound at residue Cys195. Glu491 contributes to the Mg(2+) binding site. Ser517 serves as the catalytic Proton acceptor.

Belongs to the IlvD/Edd family. As to quaternary structure, homodimer. [2Fe-2S] cluster is required as a cofactor. The cofactor is Mg(2+).

It catalyses the reaction (2R)-2,3-dihydroxy-3-methylbutanoate = 3-methyl-2-oxobutanoate + H2O. The enzyme catalyses (2R,3R)-2,3-dihydroxy-3-methylpentanoate = (S)-3-methyl-2-oxopentanoate + H2O. It participates in amino-acid biosynthesis; L-isoleucine biosynthesis; L-isoleucine from 2-oxobutanoate: step 3/4. It functions in the pathway amino-acid biosynthesis; L-valine biosynthesis; L-valine from pyruvate: step 3/4. Functionally, functions in the biosynthesis of branched-chain amino acids. Catalyzes the dehydration of (2R,3R)-2,3-dihydroxy-3-methylpentanoate (2,3-dihydroxy-3-methylvalerate) into 2-oxo-3-methylpentanoate (2-oxo-3-methylvalerate) and of (2R)-2,3-dihydroxy-3-methylbutanoate (2,3-dihydroxyisovalerate) into 2-oxo-3-methylbutanoate (2-oxoisovalerate), the penultimate precursor to L-isoleucine and L-valine, respectively. This chain is Dihydroxy-acid dehydratase, found in Shigella sonnei (strain Ss046).